The primary structure comprises 771 residues: Transducin-like enhancer protein 3-B (771 aa).

Residues 1 to 141 (MYPQGRHPAP…PLTQQQLQAQ (141 aa)) are q domain. Low complexity predominate over residues 137-148 (QLQAQHLSHAAH). Disordered regions lie at residues 137–174 (QLQAQHLSHAAHGPPVQLPPHPSGLQPPGIPPVTGSGS) and 196–360 (HHDL…MEAL). Residues 142–209 (HLSHAAHGPP…EHRERESSTN (68 aa)) are GP domain. The segment covering 196–206 (HHDLEHRERES) has biased composition (basic and acidic residues). Low complexity predominate over residues 207-217 (STNNSVSPSDS). Residues 210–278 (NSVSPSDSLR…TPRVSPSHSP (69 aa)) form a ccN domain region. Basic and acidic residues-rich tracts occupy residues 219-257 (RASEKHRGSSEYSLDPKKRRVEEKDNMSRYDSDGDKSDD) and 282-293 (GLDKARALKKDA). The Nuclear localization signal signature appears at 235-238 (KKRR). The interval 279-451 (PENGLDKARA…GGKPAYSFHV (173 aa)) is SP domain. Positions 294-309 (PNSPASVASSGSTPSS) are enriched in low complexity. Phosphoserine occurs at positions 296 and 299. The segment covering 310–319 (KAKDHPHNDK) has biased composition (basic and acidic residues). Positions 320–332 (SSTPGLKSNTPTP) are enriched in polar residues. WD repeat units follow at residues 483-521 (SHGEVVCAVTISNPTRHVYTGGKGCVKIWDISQPGSKSP), 529-568 (NRDNYIRSCKLLPDGRTLIVGGEASTLTIWDLASQTPRIK), 573-612 (SSAPACYALAISPDAKVCFSCCSDGNIAVWDLHNQTLVRQ), 615-654 (GHTDGASCIDISHDGTKLWTGGLDNTVRSWDLREGRQLQQ), 656-695 (DFTSQIFSLGYCPTGEWLAVGMESSNVEVLHHTKPDKYQL), 697-736 (LHESCVLSLKFAYCGKWFVSTGKDNLLNAWRTPYGASIFQ), and 738-771 (KESSSVLSCDISADDKYIVTGSGDKKATVYEVIY).

It belongs to the WD repeat Groucho/TLE family. At gastrulation, expression is absent within the axial mesoderm. After gastrulation is complete, expressed in the presomitic mesoderm, but expression in the tailbud doesn't begin until the six to seven somite stage, after which it becomes abundant. Expression is abundant throughout somitogenesis within the posterior half of the somites, but is absent from older somites. Also expressed in a dynamic manner within the neural plate.

It localises to the nucleus. In terms of biological role, transcriptional corepressor that binds to a number of transcription factors. Inhibits the transcriptional activation mediated by CTNNB1 and TCF family members in Wnt signaling. The effects of full-length TLE family members may be modulated by association with dominant-negative AES. The chain is Transducin-like enhancer protein 3-B from Danio rerio (Zebrafish).